We begin with the raw amino-acid sequence, 156 residues long: Small ribosomal subunit protein uS7 (156 aa).

It belongs to the universal ribosomal protein uS7 family. In terms of assembly, part of the 30S ribosomal subunit. Contacts proteins S9 and S11.

One of the primary rRNA binding proteins, it binds directly to 16S rRNA where it nucleates assembly of the head domain of the 30S subunit. Is located at the subunit interface close to the decoding center, probably blocks exit of the E-site tRNA. In Geobacillus thermodenitrificans (strain NG80-2), this protein is Small ribosomal subunit protein uS7.